The following is a 92-amino-acid chain: Small archaeal modifier protein 3 (92 aa).

Residues lysine 18, lysine 55, and lysine 62 each participate in a glycyl lysine isopeptide (Lys-Gly) (interchain with G-Cter in SAMP3) cross-link. At glycine 92 the chain carries Glycyl adenylate; alternate. A Glycyl lysine isopeptide (Gly-Lys) (interchain with K-? in acceptor proteins); alternate cross-link involves residue glycine 92.

In terms of assembly, monomer. Post-translationally, the C-terminal glycine is likely acyl-adenylated (-COAMP) by UbaA.

Its function is as follows. Functions as a protein modifier covalently attached to lysine residues of substrate proteins. The protein modification process is termed sampylation and involves the formation of an isopeptide bond between the SAMP3 C-terminal glycine carboxylate and the epsilon-amino group of lysine residues on target proteins. Seems to be able to form polymeric chains with itself at Lys-18, Lys-55 and Lys-62, similar to ubiquitin and other ubiquitin-like proteins. SAMP3 appears not to serve as a proteolytic signal in the cell to target proteins for degradation by proteasomes. May regulate molybdenum cofactor (MoCo) biosynthesis by inhibiting the activity of MPT synthase MoaE under aerobic conditions, providing a hierarchy of oxygen use prior to that of alternative electron acceptors such as DMSO. The polypeptide is Small archaeal modifier protein 3 (samp3) (Haloferax volcanii (strain ATCC 29605 / DSM 3757 / JCM 8879 / NBRC 14742 / NCIMB 2012 / VKM B-1768 / DS2) (Halobacterium volcanii)).